We begin with the raw amino-acid sequence, 161 residues long: UPF0178 protein BR1979/BS1330_I1973 (161 aa).

Belongs to the UPF0178 family.

The protein is UPF0178 protein BR1979/BS1330_I1973 of Brucella suis biovar 1 (strain 1330).